Reading from the N-terminus, the 462-residue chain is Zinc finger CCCH domain-containing protein 34 (462 aa).

Residues 1–13 (MERYGRPGEEGSR) are compositionally biased toward basic and acidic residues. The disordered stretch occupies residues 1-26 (MERYGRPGEEGSRSDPSLEWTSHGGE). 3 consecutive C3H1-type zinc fingers follow at residues 54 to 82 (RPDE…HPRD), 100 to 128 (RMGH…HPRQ), and 148 to 176 (RPGE…HPVP). Residues 288–303 (TGTYQSVPSSNSTSKE) show a composition bias toward polar residues. The disordered stretch occupies residues 288–310 (TGTYQSVPSSNSTSKEFPQRPDQ). 2 consecutive C3H1-type zinc fingers follow at residues 307-335 (RPDQ…HPVD) and 353-381 (RPGV…HSMS). Positions 405–418 (SSSLSGSSAPVSSS) are enriched in low complexity. The interval 405 to 462 (SSSLSGSSAPVSSSNEPTKEAVTPAVSSMVSGLSRPEPAETSGDSASVSGSIEAKTSS) is disordered. Residues 446-462 (SGDSASVSGSIEAKTSS) show a composition bias toward polar residues.

It is found in the nucleus. This Arabidopsis thaliana (Mouse-ear cress) protein is Zinc finger CCCH domain-containing protein 34.